Reading from the N-terminus, the 385-residue chain is Centrosomal protein of 44 kDa (385 aa).

The segment at 11–192 (RNLEQVLRSL…GANIPEDTVT (182 aa)) is binds with microtubules and centrioles. Residues 126-154 (LEKTPSQQRKKTSSAKSEPCSSTEKTSTE) form a disordered region. The span at 139–154 (SAKSEPCSSTEKTSTE) shows a compositional bias: polar residues. Residues 230-271 (EVTALQSMLAECQEKLKKLTCIESRLESLEEKMKGKVLVNEK) are a coiled coil. Residues 303–348 (SEDYSSSSDMDSLNPDRKSKEERHANIPLSSGYSTVSSDSTPRTST) are disordered. Low complexity predominate over residues 305 to 314 (DYSSSSDMDS). Residues 316–327 (NPDRKSKEERHA) are compositionally biased toward basic and acidic residues. Residues 332-342 (SSGYSTVSSDS) show a composition bias toward low complexity. Serine 342 bears the Phosphoserine mark. Threonine 343 bears the Phosphothreonine mark. Positions 358–381 (SEETTMQKMERMKKMFEETAELLK) form a coiled coil.

Interacts with CROCC. Interacts with POC1B; the interaction is direct and recruits POC1B to centriolar microtubules. Binds to centriolar microtubules.

It is found in the cytoplasm. The protein localises to the cytoskeleton. Its subcellular location is the microtubule organizing center. The protein resides in the centrosome. It localises to the centriole. It is found in the spindle pole. The protein localises to the midbody. In terms of biological role, centriole-enriched microtubule-binding protein involved in centriole biogenesis. In collaboration with CEP295 and POC1B, is required for the centriole-to-centrosome conversion by ensuring the formation of bona fide centriole wall. Functions as a linker component that maintains centrosome cohesion. Associates with CROCC and regulates its stability and localization to the centrosome. This chain is Centrosomal protein of 44 kDa (CEP44), found in Bos taurus (Bovine).